Consider the following 335-residue polypeptide: Vitamin B12 import system permease protein BtuC (335 aa).

The next 9 helical transmembrane spans lie at 21 to 43 (FLAI…GENW), 63 to 82 (FPRV…AGAV), 95 to 114 (GLLG…VLMF), 119 to 141 (PFWL…LLTF), 153 to 175 (LLVG…YFST), 195 to 212 (WRHQ…IWLS), 244 to 266 (FAVG…IGLV), 281 to 303 (TLLP…LSRL), and 310 to 329 (VPIG…WLLL).

The protein belongs to the binding-protein-dependent transport system permease family. FecCD subfamily. The complex is composed of two ATP-binding proteins (BtuD), two transmembrane proteins (BtuC) and a solute-binding protein (BtuF).

The protein localises to the cell inner membrane. Part of the ABC transporter complex BtuCDF involved in vitamin B12 import. Involved in the translocation of the substrate across the membrane. In Photorhabdus laumondii subsp. laumondii (strain DSM 15139 / CIP 105565 / TT01) (Photorhabdus luminescens subsp. laumondii), this protein is Vitamin B12 import system permease protein BtuC.